A 684-amino-acid polypeptide reads, in one-letter code: Protein SEEDLING PLASTID DEVELOPMENT 1 (684 aa).

The N-terminal 78 residues, 1–78 (MRALNSRLVL…FSFDVRSPSS (78 aa)), are a transit peptide targeting the chloroplast. The segment at 33 to 91 (SDSSSSFRRTRGARQRIASSKSPASSPSPVRRPSDGFSFDVRSPSSDSSISSRKSPTTA) is disordered. Over residues 50–88 (ASSKSPASSPSPVRRPSDGFSFDVRSPSSDSSISSRKSP) the composition is skewed to low complexity. 220 to 227 (GSPGVGKT) is an ATP binding site. Positions 651–684 (PRRSTKKTLTSSSPQKSADGSMGTTGTRLPFLKD) are disordered. Residues 657–667 (KTLTSSSPQKS) are compositionally biased toward low complexity.

Belongs to the ycf45 family.

Its subcellular location is the plastid. It localises to the chloroplast membrane. The protein localises to the chloroplast envelope. Required during eoplast (a highly reduced plastid type present during the degreening and dehydration stages of seed maturation) development in embryos and early stages of eoplast redifferentiation during seedling growth. The polypeptide is Protein SEEDLING PLASTID DEVELOPMENT 1 (Arabidopsis thaliana (Mouse-ear cress)).